The chain runs to 480 residues: Flotillin-like protein 2 (480 aa).

Residue C37 is the site of S-palmitoyl cysteine attachment. Residues 237-257 (ENQREAEVAQANSELAKKKAA) are a coiled coil.

This sequence belongs to the band 7/mec-2 family. Flotillin subfamily. In terms of processing, may be palmitoylated. Expressed in flowers in green pods. Primarily expressed in vascular tissues. Upon induction of nodulation, expansion of expression in the root cortex in the region of elongating root hairs, which will eventually become colonized by bacteria. Expressed in the infection zone in nodules.

The protein resides in the cell membrane. Its subcellular location is the membrane. It is found in the caveola. In terms of biological role, may act as a scaffolding protein within caveolar membranes, functionally participating in formation of caveolae or caveolae-like vesicles. Required for early symbiotic events and nodules formation. In Medicago truncatula (Barrel medic), this protein is Flotillin-like protein 2 (FLOT2).